A 353-amino-acid polypeptide reads, in one-letter code: Phospho-N-acetylmuramoyl-pentapeptide-transferase (353 aa).

The next 10 helical transmembrane spans lie at 13–33 (ILGY…FFTL), 66–86 (TPTM…LISI), 88–108 (FSNL…IIGF), 130–150 (LILQ…LSDF), 162–182 (PLFD…IATS), 193–213 (GLAT…IYIT), 229–249 (IGEV…FLWY), 256–276 (VFMG…LAII), 281–301 (ILLL…ILQV), and 330–350 (KIIV…LITL).

Belongs to the glycosyltransferase 4 family. MraY subfamily. Requires Mg(2+) as cofactor.

It localises to the cell inner membrane. The catalysed reaction is UDP-N-acetyl-alpha-D-muramoyl-L-alanyl-gamma-D-glutamyl-meso-2,6-diaminopimeloyl-D-alanyl-D-alanine + di-trans,octa-cis-undecaprenyl phosphate = di-trans,octa-cis-undecaprenyl diphospho-N-acetyl-alpha-D-muramoyl-L-alanyl-D-glutamyl-meso-2,6-diaminopimeloyl-D-alanyl-D-alanine + UMP. Its pathway is cell wall biogenesis; peptidoglycan biosynthesis. Its function is as follows. Catalyzes the initial step of the lipid cycle reactions in the biosynthesis of the cell wall peptidoglycan: transfers peptidoglycan precursor phospho-MurNAc-pentapeptide from UDP-MurNAc-pentapeptide onto the lipid carrier undecaprenyl phosphate, yielding undecaprenyl-pyrophosphoryl-MurNAc-pentapeptide, known as lipid I. In Sulfurimonas denitrificans (strain ATCC 33889 / DSM 1251) (Thiomicrospira denitrificans (strain ATCC 33889 / DSM 1251)), this protein is Phospho-N-acetylmuramoyl-pentapeptide-transferase.